A 529-amino-acid polypeptide reads, in one-letter code: Snake venom 5'-nucleotidase (529 aa).

Residue G1 is a signal peptide. 2 residues coordinate Zn(2+): D12 and H14. A disulfide bridge connects residues C27 and C32. Zn(2+) is bound by residues D60, N92, H195, and H218. N-linked (GlcNAc...) asparagine glycosylation is found at N308 and N322. Intrachain disulfides connect C328-C333 and C340-C362. Position 329 (R329) interacts with AMP. AMP is bound by residues N365, R370, and F393. C452 and C455 are disulfide-bonded. AMP is bound by residues F476 and D482. A lipid anchor (GPI-anchor amidated serine) is attached at S525. A propeptide spans 526 to 529 (removed in mature form); sequence AGSL.

The protein belongs to the 5'-nucleotidase family. It depends on Zn(2+) as a cofactor. In terms of processing, venom 5'-nucleotidases (or a part thereof) may be released into the venom via exosome-like vesicles. They may be attached via a GPI anchor to the membrane of these vesicles. Soluble forms of 5'-nucleotidase might be released by cleavage of the ectodomain in the exosome-like vesicles or venom gland cells. Expressed by the venom gland.

It localises to the membrane. It carries out the reaction a ribonucleoside 5'-phosphate + H2O = a ribonucleoside + phosphate. Its function is as follows. Hydrolyzes nucleotides into nucleosides. Snake venom 5'-nucleotidases are widely distributed among venomous snake taxa, but there is a lack of information about their biological activities. They have been shown to inhibit platelet aggregation. This effect may be due to the liberation of inhibitory AMP or adenosine by its action on ADP released upon initiation of aggregation. Venom 5'-nucleotidases are also known to synergistically act in vivo with other toxins like ADPases, phospholipases, and disintegrins to exert a more pronounced anti-coagulant effect. The sequence is that of Snake venom 5'-nucleotidase from Naja atra (Chinese cobra).